A 449-amino-acid polypeptide reads, in one-letter code: G-protein coupled receptor 61 (449 aa).

Residues 1 to 14 (MESSPIPQSSGNSS) are compositionally biased toward low complexity. The interval 1 to 29 (MESSPIPQSSGNSSTLGRALQTPGPSTAS) is disordered. Residues 1–44 (MESSPIPQSSGNSSTLGRALQTPGPSTASGVPELGLRDVASESV) are Extracellular-facing. Asparagine 12 carries N-linked (GlcNAc...) asparagine glycosylation. The helical transmembrane segment at 45–67 (ALFFMLLLDLTAVAGNAAVMAVI) threads the bilayer. Residues 68 to 75 (AKTPALRK) are Cytoplasmic-facing. A helical transmembrane segment spans residues 76–98 (FVFVFHLCLVDLLAALTLMPLAM). The Extracellular segment spans residues 99–112 (LSSSALFDHALFGE). A helical membrane pass occupies residues 113-135 (VACRLYLFLSVCFVSLAILSVSA). Residues 136–155 (INVERYYYVVHPMRYEVRMT) are Cytoplasmic-facing. The chain crosses the membrane as a helical span at residues 156 to 178 (LGLVASVLVGVWVKALAMASVPV). Over 179–206 (LGRVYWEEGAPSVNPGCSLQWSHSAYCQ) the chain is Extracellular. A helical transmembrane segment spans residues 207–229 (LFVVVFAVLYFLLPLILIFVVYC). Over 230-287 (SMFRVARVAAMQHGPLPTWMETPRQRSESLSSRSTMVTSSGAHQTTPHRTFGGGKAAV) the chain is Cytoplasmic. A helical membrane pass occupies residues 288–310 (VLLAVGGQFLLCWLPYFSFHLYV). The Extracellular portion of the chain corresponds to 311 to 324 (ALSAQPISAGQVEN). A helical membrane pass occupies residues 325–344 (VVTWIGYFCFTSNPFFYGCL). Topologically, residues 345–449 (NRQIRGELSK…RPAPSPRLES (105 aa)) are cytoplasmic.

Belongs to the G-protein coupled receptor 1 family. Forms heterodimer with MTNR1B. Interacts with ARRB1 and ARRB2 in a spontaneous and agonist-independent manner; leading to the internalization of GPR61 in the endosomal compartment. As to expression, predominantly expressed in the brain and testes, with relatively lower expression observed in the eye, adrenal gland and pituitary gland.

The protein localises to the cell membrane. Its subcellular location is the endosome membrane. Orphan G-protein coupled receptor. Constitutively activates the G(s)-alpha/cAMP signaling pathway. Shows a reciprocal regulatory interaction with the melatonin receptor MTNR1B most likely through receptor heteromerization. May be involved in the regulation of food intake and body weight. The chain is G-protein coupled receptor 61 (Gpr61) from Mus musculus (Mouse).